A 33-amino-acid chain; its full sequence is Photosystem II reaction center protein Psb30 (33 aa).

A helical membrane pass occupies residues 5-25 (LIVQLGSLTLITLAGPLVVVL).

The protein belongs to the Psb30/Ycf12 family. As to quaternary structure, PSII is composed of 1 copy each of membrane proteins PsbA, PsbB, PsbC, PsbD, PsbE, PsbF, PsbH, PsbI, PsbJ, PsbK, PsbL, PsbM, PsbT, PsbY, PsbZ, Psb30/Ycf12, peripheral proteins of the oxygen-evolving complex and a large number of cofactors. It forms dimeric complexes.

Its subcellular location is the plastid. It is found in the chloroplast thylakoid membrane. Its function is as follows. A core subunit of photosystem II (PSII), probably helps stabilize the reaction center. The polypeptide is Photosystem II reaction center protein Psb30 (Euglena deses).